A 133-amino-acid polypeptide reads, in one-letter code: UPF0102 protein Plav_3586 (133 aa).

Belongs to the UPF0102 family.

In Parvibaculum lavamentivorans (strain DS-1 / DSM 13023 / NCIMB 13966), this protein is UPF0102 protein Plav_3586.